Consider the following 296-residue polypeptide: Lipoyl synthase (296 aa).

The [4Fe-4S] cluster site is built by Cys-37, Cys-42, Cys-48, Cys-63, Cys-67, Cys-70, and Ser-276. Residues 49–265 (WSKKHATMMI…ERVARTKGFL (217 aa)) enclose the Radical SAM core domain.

It belongs to the radical SAM superfamily. Lipoyl synthase family. [4Fe-4S] cluster is required as a cofactor.

It is found in the cytoplasm. It catalyses the reaction [[Fe-S] cluster scaffold protein carrying a second [4Fe-4S](2+) cluster] + N(6)-octanoyl-L-lysyl-[protein] + 2 oxidized [2Fe-2S]-[ferredoxin] + 2 S-adenosyl-L-methionine + 4 H(+) = [[Fe-S] cluster scaffold protein] + N(6)-[(R)-dihydrolipoyl]-L-lysyl-[protein] + 4 Fe(3+) + 2 hydrogen sulfide + 2 5'-deoxyadenosine + 2 L-methionine + 2 reduced [2Fe-2S]-[ferredoxin]. It participates in protein modification; protein lipoylation via endogenous pathway; protein N(6)-(lipoyl)lysine from octanoyl-[acyl-carrier-protein]: step 2/2. In terms of biological role, catalyzes the radical-mediated insertion of two sulfur atoms into the C-6 and C-8 positions of the octanoyl moiety bound to the lipoyl domains of lipoate-dependent enzymes, thereby converting the octanoylated domains into lipoylated derivatives. This chain is Lipoyl synthase, found in Rickettsia canadensis (strain McKiel).